We begin with the raw amino-acid sequence, 493 residues long: 3-ketoacyl-CoA synthase 16 (493 aa).

Positions 1 to 35 are cleaved as a signal peptide; the sequence is MDYPMKKVKIFFNYLMAHRFKLCFLPLMVAIAVEA. A helical transmembrane segment spans residues 52 to 74; that stretch reads NNHTSLTMFFLYLALGSTLYLMT. The FAE domain occupies 71–366; that stretch reads YLMTRPKPVY…FFVRFVKKKF (296 aa). Active-site residues include Cys-221, His-300, His-384, His-388, His-417, and Asn-421.

It belongs to the thiolase-like superfamily. Chalcone/stilbene synthases family. Expressed in siliques.

It localises to the membrane. It catalyses the reaction a very-long-chain acyl-CoA + malonyl-CoA + H(+) = a very-long-chain 3-oxoacyl-CoA + CO2 + CoA. It participates in lipid metabolism; fatty acid biosynthesis. The protein is 3-ketoacyl-CoA synthase 16 of Arabidopsis thaliana (Mouse-ear cress).